The chain runs to 293 residues: Elongation factor Ts (293 aa).

Residues 80 to 83 form an involved in Mg(2+) ion dislocation from EF-Tu region; it reads TDFV.

Belongs to the EF-Ts family.

It is found in the cytoplasm. In terms of biological role, associates with the EF-Tu.GDP complex and induces the exchange of GDP to GTP. It remains bound to the aminoacyl-tRNA.EF-Tu.GTP complex up to the GTP hydrolysis stage on the ribosome. This is Elongation factor Ts from Paraburkholderia phytofirmans (strain DSM 17436 / LMG 22146 / PsJN) (Burkholderia phytofirmans).